An 85-amino-acid chain; its full sequence is Exodeoxyribonuclease 7 small subunit (85 aa).

The protein belongs to the XseB family. Heterooligomer composed of large and small subunits.

The protein resides in the cytoplasm. The catalysed reaction is Exonucleolytic cleavage in either 5'- to 3'- or 3'- to 5'-direction to yield nucleoside 5'-phosphates.. Bidirectionally degrades single-stranded DNA into large acid-insoluble oligonucleotides, which are then degraded further into small acid-soluble oligonucleotides. This is Exodeoxyribonuclease 7 small subunit from Mycobacterium bovis (strain ATCC BAA-935 / AF2122/97).